The sequence spans 124 residues: Chemotaxis protein CheY1 (124 aa).

The Response regulatory domain occupies 2 to 120 (KLLVVDDSST…VLKEKLEVVL (119 aa)). 4 residues coordinate Mg(2+): aspartate 7, aspartate 8, aspartate 53, and asparagine 55. Residue aspartate 53 is modified to 4-aspartylphosphate.

In terms of assembly, interacts (when phosphorylated) with FliM. Mg(2+) is required as a cofactor. Phosphorylated by CheAY. Dephosphorylated (inactivated) by CheZ.

It is found in the cytoplasm. In terms of biological role, chemotactic response regulator protein that modulates the rotation direction of bacterial flagellar motors. Plays an important role in the colonization and infection of Helicobacter pylori. Upon phosphorylation by CheA, interacts with the flagellar motor protein FliM to cause clockwise flagellar rotation and bacterial reversals, as opposed to straight swimming when CheY1 is not phosphorylated. This Helicobacter pylori (strain ATCC 700392 / 26695) (Campylobacter pylori) protein is Chemotaxis protein CheY1.